A 607-amino-acid polypeptide reads, in one-letter code: Zinc finger CCCH domain-containing protein 66 (607 aa).

ANK repeat units follow at residues 57-87 (EERTPLMIAALFGSKEVVDYIISTGLVDVNR) and 92-124 (DGATALHCAVSGLSANSLEIVTLLLKGSANPDS). Positions 161–178 (LNEVNGQEESEPEVEVEV) are enriched in acidic residues. Residues 161 to 193 (LNEVNGQEESEPEVEVEVEVSPPRGSERKEYPV) form a disordered region. 2 consecutive C3H1-type zinc fingers follow at residues 254–276 (PCPEFRKGSCSRGDTCEYAHGIF) and 284–308 (QYRTRLCKDETNCSRRVCFFAHKPE). Residues 342-363 (ISPLPIGATTTPPLSPNGVSSP) form a disordered region. Residues 349 to 361 (ATTTPPLSPNGVS) are compositionally biased toward polar residues.

In Arabidopsis thaliana (Mouse-ear cress), this protein is Zinc finger CCCH domain-containing protein 66.